Here is a 95-residue protein sequence, read N- to C-terminus: Ribonuclease kappa (95 aa).

Helical transmembrane passes span 12–32 and 68–88; these read GLII…FFYI and CWIA…QFYM.

The protein belongs to the RNase K family.

Its subcellular location is the membrane. Endoribonuclease. Functionally, (Microbial infection) Required for the initial stages of clathrin-mediated endocytic uptake of a diverse set of flaviviruses, including dengue and West Nile. Not required for clathrin-mediated endocytosis and macropinocytosis. This is Ribonuclease kappa from Drosophila melanogaster (Fruit fly).